Consider the following 653-residue polypeptide: J protein JJJ2 (653 aa).

Positions 14–78 (TLYSVLNLKY…KEKMKYDSKL (65 aa)) constitute a J domain. 2 disordered regions span residues 85–308 (DYSP…SSTE) and 490–512 (VSPK…EENL). 2 stretches are compositionally biased toward polar residues: residues 161–171 (NAKSYQNSKKS) and 187–200 (ATSF…SSSV). Low complexity predominate over residues 213–241 (SGSAVGSESRISSSGSESSSNVNSATGSS). Residues 298–308 (PVKTTPNSSTE) are compositionally biased toward polar residues.

It localises to the cytoplasm. The protein resides in the nucleus. The polypeptide is J protein JJJ2 (JJJ2) (Kluyveromyces lactis (strain ATCC 8585 / CBS 2359 / DSM 70799 / NBRC 1267 / NRRL Y-1140 / WM37) (Yeast)).